We begin with the raw amino-acid sequence, 314 residues long: Olfactory receptor 52B4 (314 aa).

Residues 1-27 (MPTVNHSGTSHTVFHLLGIPGLQDQHM) lie on the Extracellular side of the membrane. N5 is a glycosylation site (N-linked (GlcNAc...) asparagine). Residues 28-48 (WISIPFFISYVTALLGNSLLI) form a helical membrane-spanning segment. Topologically, residues 49 to 56 (FIILTKRS) are cytoplasmic. Residues 57 to 77 (LHEPMYLFLCMLAGADIVLST) form a helical membrane-spanning segment. Residues 78 to 101 (CTIPQALAIFWFRAGDISLDRCIT) are Extracellular-facing. C99 and C191 are disulfide-bonded. The chain crosses the membrane as a helical span at residues 102–122 (QLFFIHSTFISESGILLVMAF). Residues 123-141 (DHYIAICYPLRYTTILTNA) are Cytoplasmic-facing. Residues 142 to 162 (LIKKICVTVSLRSYGTIFPII) form a helical membrane-spanning segment. Topologically, residues 163–198 (FLLKRLTFCQNNIIPHTFCEHIGLAKYACNDIRINI) are extracellular. The chain crosses the membrane as a helical span at residues 199 to 219 (WYGFSILMSTVVLDVVLIFIS). The Cytoplasmic segment spans residues 220-239 (YMLILHAVFHMPSPDACHKA). Residues 240 to 260 (LNTFGSHVCIIILFYGSGIFT) form a helical membrane-spanning segment. Topologically, residues 261-275 (ILTQRFGRHIPPCIH) are extracellular. The helical transmembrane segment at 276–296 (IPLANVCILAPPMLNPIIYGI) threads the bilayer. Over 297-314 (KTKQIQEQVVQFLFIKQK) the chain is Cytoplasmic.

This sequence belongs to the G-protein coupled receptor 1 family.

It is found in the cell membrane. Functionally, odorant receptor. This is Olfactory receptor 52B4 (OR52B4) from Homo sapiens (Human).